A 284-amino-acid polypeptide reads, in one-letter code: L-ribulose-5-phosphate 3-epimerase UlaE (284 aa).

This sequence belongs to the L-ribulose-5-phosphate 3-epimerase family.

The enzyme catalyses L-ribulose 5-phosphate = L-xylulose 5-phosphate. Its pathway is cofactor degradation; L-ascorbate degradation; D-xylulose 5-phosphate from L-ascorbate: step 3/4. In terms of biological role, catalyzes the isomerization of L-xylulose-5-phosphate to L-ribulose-5-phosphate. Is involved in the anaerobic L-ascorbate utilization. The sequence is that of L-ribulose-5-phosphate 3-epimerase UlaE from Escherichia coli O45:K1 (strain S88 / ExPEC).